A 400-amino-acid chain; its full sequence is Carbamoyl phosphate synthase small chain (400 aa).

The interval 1-199 (MSNETNANST…PYVIEAEGEA (199 aa)) is CPSase. Residues Ser-66, Gly-250, and Gly-252 each contribute to the L-glutamine site. The Glutamine amidotransferase type-1 domain occupies 200 to 395 (RHTVVAYDLG…VALMDEDSEN (196 aa)). The active-site Nucleophile is Cys-278. Positions 279, 282, 320, 322, and 323 each coordinate L-glutamine. Active-site residues include His-368 and Glu-370.

This sequence belongs to the CarA family. Composed of two chains; the small (or glutamine) chain promotes the hydrolysis of glutamine to ammonia, which is used by the large (or ammonia) chain to synthesize carbamoyl phosphate. Tetramer of heterodimers (alpha,beta)4.

It catalyses the reaction hydrogencarbonate + L-glutamine + 2 ATP + H2O = carbamoyl phosphate + L-glutamate + 2 ADP + phosphate + 2 H(+). It carries out the reaction L-glutamine + H2O = L-glutamate + NH4(+). It functions in the pathway amino-acid biosynthesis; L-arginine biosynthesis; carbamoyl phosphate from bicarbonate: step 1/1. It participates in pyrimidine metabolism; UMP biosynthesis via de novo pathway; (S)-dihydroorotate from bicarbonate: step 1/3. In terms of biological role, small subunit of the glutamine-dependent carbamoyl phosphate synthetase (CPSase). CPSase catalyzes the formation of carbamoyl phosphate from the ammonia moiety of glutamine, carbonate, and phosphate donated by ATP, constituting the first step of 2 biosynthetic pathways, one leading to arginine and/or urea and the other to pyrimidine nucleotides. The small subunit (glutamine amidotransferase) binds and cleaves glutamine to supply the large subunit with the substrate ammonia. The protein is Carbamoyl phosphate synthase small chain of Corynebacterium efficiens (strain DSM 44549 / YS-314 / AJ 12310 / JCM 11189 / NBRC 100395).